Here is a 233-residue protein sequence, read N- to C-terminus: LexA repressor (233 aa).

Positions 26 to 46 (FDEMKDALDLRSKSGIHRLIT) form a DNA-binding region, H-T-H motif. Active-site for autocatalytic cleavage activity residues include Ser-154 and Lys-192.

This sequence belongs to the peptidase S24 family. In terms of assembly, homodimer.

It carries out the reaction Hydrolysis of Ala-|-Gly bond in repressor LexA.. In terms of biological role, represses a number of genes involved in the response to DNA damage (SOS response), including recA and lexA. In the presence of single-stranded DNA, RecA interacts with LexA causing an autocatalytic cleavage which disrupts the DNA-binding part of LexA, leading to derepression of the SOS regulon and eventually DNA repair. The chain is LexA repressor from Nitrobacter winogradskyi (strain ATCC 25391 / DSM 10237 / CIP 104748 / NCIMB 11846 / Nb-255).